We begin with the raw amino-acid sequence, 99 residues long: A-type ATP synthase subunit F (99 aa).

Belongs to the V-ATPase F subunit family. In terms of assembly, has multiple subunits with at least A(3), B(3), C, D, E, F, H, I and proteolipid K(x).

Its subcellular location is the cell membrane. Its function is as follows. Component of the A-type ATP synthase that produces ATP from ADP in the presence of a proton gradient across the membrane. The polypeptide is A-type ATP synthase subunit F (Methanococcus maripaludis (strain C5 / ATCC BAA-1333)).